A 407-amino-acid polypeptide reads, in one-letter code: MKKIALIIGSMIAGGIISAAGFTWFAKAEPPAEKTSTAERKILFWYDPMYPNTRFDKPGKSPFMDMDLVPKYADEESSASGVRIDPTQTQNLGVKTATVTRGPLTFAQSFPANVSYNEYQYAIVQARAAGFIDKVYPLTVGDKVQKGAPLLDLTIPDWVEAQSEYLLLRETGGTATQTEGILERLRLAGMPEADIRRLIATQKIQTRFTLKAPIDGVITAFDLRAGMNIAKDNVVAKIQGMDPVWVTAAIPESIAWLVKDASQFTLTVPARPDKTLTIRKWTLLPGVDAATRTLQLRLEVDNADEALKPGMNAWLKLNTASEPMLLIPSQALIDTGSEQRVITVDADGRFVPKRVAVFQASQGVTALRSGLAEGEKVVSSGLFLIDSEANISGALERMRSESATHAH.

The N-terminal stretch at M1–A28 is a signal peptide.

The protein belongs to the membrane fusion protein (MFP) (TC 8.A.1) family. As to quaternary structure, the cus efflux system is composed of CusA, CusB, CusC and CusF.

Part of a cation efflux system that mediates resistance to copper and silver. The protein is Cation efflux system protein CusB (cusB) of Escherichia coli O157:H7.